The sequence spans 239 residues: Ribonuclease HII (239 aa).

One can recognise an RNase H type-2 domain in the interval 30 to 221; the sequence is GPVAGVDEVG…VRRLVTAGTP (192 aa). The a divalent metal cation site is built by Asp-36, Glu-37, and Asp-130.

The protein belongs to the RNase HII family. Mn(2+) is required as a cofactor. The cofactor is Mg(2+).

It localises to the cytoplasm. It carries out the reaction Endonucleolytic cleavage to 5'-phosphomonoester.. Functionally, endonuclease that specifically degrades the RNA of RNA-DNA hybrids. This Mycobacterium sp. (strain JLS) protein is Ribonuclease HII.